Here is a 538-residue protein sequence, read N- to C-terminus: Bifunctional purine biosynthesis protein PurH (538 aa).

Positions 11–158 (PDLHRVRRAL…KNHAYTGVVT (148 aa)) constitute an MGS-like domain.

The protein belongs to the PurH family.

The catalysed reaction is (6R)-10-formyltetrahydrofolate + 5-amino-1-(5-phospho-beta-D-ribosyl)imidazole-4-carboxamide = 5-formamido-1-(5-phospho-D-ribosyl)imidazole-4-carboxamide + (6S)-5,6,7,8-tetrahydrofolate. It catalyses the reaction IMP + H2O = 5-formamido-1-(5-phospho-D-ribosyl)imidazole-4-carboxamide. The protein operates within purine metabolism; IMP biosynthesis via de novo pathway; 5-formamido-1-(5-phospho-D-ribosyl)imidazole-4-carboxamide from 5-amino-1-(5-phospho-D-ribosyl)imidazole-4-carboxamide (10-formyl THF route): step 1/1. It participates in purine metabolism; IMP biosynthesis via de novo pathway; IMP from 5-formamido-1-(5-phospho-D-ribosyl)imidazole-4-carboxamide: step 1/1. The sequence is that of Bifunctional purine biosynthesis protein PurH from Bartonella bacilliformis (strain ATCC 35685 / KC583 / Herrer 020/F12,63).